We begin with the raw amino-acid sequence, 418 residues long: Nucleoside permease NupG (418 aa).

Topologically, residues 1-4 are cytoplasmic; it reads MNLK. A helical membrane pass occupies residues 5–29; the sequence is LQLKILSFLQFCLWGSWLTTLGSYM. The Periplasmic portion of the chain corresponds to 30 to 36; that stretch reads FVTLKFD. The chain crosses the membrane as a helical span at residues 37 to 58; the sequence is GASIGAVYSSLGIAAVFMPALL. Residues 59-67 are Cytoplasmic-facing; sequence GIVADKWLS. Residues 68-88 traverse the membrane as a helical segment; that stretch reads AKWVYAICHTIGAITLFMAAQ. Residues 89 to 91 are Periplasmic-facing; the sequence is VTT. A helical transmembrane segment spans residues 92 to 113; the sequence is PEAMFLVILINSFAYMPTLGLI. The Cytoplasmic segment spans residues 114–135; it reads NTISYYRLQNAGMDIVTDFPPI. The chain crosses the membrane as a helical span at residues 136–156; the sequence is RIWGTIGFIMAMWVVSLSGFE. The Periplasmic portion of the chain corresponds to 157–158; it reads LS. A helical membrane pass occupies residues 159 to 178; the sequence is HMQLYIGAALSAILVLFTLT. The Cytoplasmic portion of the chain corresponds to 179–209; sequence LPHIPVAKQQANQSWTTLLGLDAFALFKNKR. A helical transmembrane segment spans residues 210-236; the sequence is MAIFFIFSMLLGAELQITNMFGNTFLH. Residues 237-247 lie on the Periplasmic side of the membrane; that stretch reads SFDKDPMFASS. The chain crosses the membrane as a helical span at residues 248–268; that stretch reads FIVQHASIIMSISQISETLFI. Residues 269 to 280 are Cytoplasmic-facing; it reads LTIPFFLSRYGI. The chain crosses the membrane as a helical span at residues 281-300; it reads KNVMMISIVAWILRFALFAY. The Periplasmic portion of the chain corresponds to 301–305; the sequence is GDPTP. The chain crosses the membrane as a helical span at residues 306-326; it reads FGTVLLVLSMIVYGCAFDFFN. Topologically, residues 327–346 are cytoplasmic; sequence ISGSVFVEKEVSPAIRASAQ. A helical membrane pass occupies residues 347-369; sequence GMFLMMTNGFGCILGGIVSGKVV. Residues 370 to 379 are Periplasmic-facing; sequence EMYTQNGITD. The helical transmembrane segment at 380–403 threads the bilayer; it reads WQTVWLIFAGYSVVLAFAFMAMFK. The Cytoplasmic segment spans residues 404–418; it reads YKHVRVPTGTQTVSH.

Belongs to the major facilitator superfamily. Nucleoside:H(+) symporter (NHS) (TC 2.A.1.10) family.

Its subcellular location is the cell inner membrane. It carries out the reaction adenosine(in) + H(+)(in) = adenosine(out) + H(+)(out). It catalyses the reaction uridine(in) + H(+)(in) = uridine(out) + H(+)(out). The enzyme catalyses thymidine(in) + H(+)(in) = thymidine(out) + H(+)(out). The catalysed reaction is cytidine(in) + H(+)(in) = cytidine(out) + H(+)(out). It carries out the reaction 2'-deoxycytidine(in) + H(+)(in) = 2'-deoxycytidine(out) + H(+)(out). It catalyses the reaction guanosine(in) + H(+)(in) = guanosine(out) + H(+)(out). The enzyme catalyses inosine(in) + H(+)(in) = inosine(out) + H(+)(out). With respect to regulation, inhibited by the protonophore uncouplers 2,4-dinitrophenol and carbonyl cyanide m-chlorophenylhydrazone (CCCP), and by valinomycin. Inhibited by the nucleoside antibiotic showdomycin. Functionally, broad-specificity transporter of purine and pyrimidine nucleosides. Can transport adenosine, uridine, thymidine, cytidine, deoxycytidine, guanosine and inosine. Can also transport xanthosine, but with a very low affinity. Transport is driven by a proton motive force. The sequence is that of Nucleoside permease NupG from Escherichia coli (strain K12).